Reading from the N-terminus, the 534-residue chain is MRLRGCGPRAAPASSAGASDARLLAPPGRNPFVHELRLSALQKAQVALMTLTLFPVRLLVAAAMMLLAWPLALVASLGSAEKEPEQPPALWRKVVDFLLKAIMRTMWFAGGFHRVAVKGRQALPTEAAILTLAPHSSYFDAIPVTMTMSSIVMKAESRDIPIWGTLIQYIRPVFVSRSDQDSRRKTVEEIKRRAQSNGKWPQIMIFPEGTCTNRTCLITFKPGAFIPGAPVQPVVLRYPNKLDTITWTWQGPGALEILWLTLCQFHNQVEIEFLPVYSPSEEEKRNPALYASNVRRVMAEALGVSVTDYTFEDCQLALAEGQLRLPADTCLLEFARLVRGLGLKPEKLEKDLDRYSERARMKGGEKIGIAEFAASLEVPVSDLLEDMFSLFDESGSGEVDLRECVVALSVVCRPARTLDTIQLAFKMYGAQEDGSVGEGDLSCILKTALGVAELTVTDLFRAIDQEEKGKITFADFHRFAEMYPAFAEEYLYPDQTHFESCAETSPAPIPNGFCADFSPENSDAGRKPVRKKLD.

The tract at residues 1–22 is disordered; that stretch reads MRLRGCGPRAAPASSAGASDAR. The Cytoplasmic segment spans residues 1–57; the sequence is MRLRGCGPRAAPASSAGASDARLLAPPGRNPFVHELRLSALQKAQVALMTLTLFPVR. Residues 7-22 are compositionally biased toward low complexity; it reads GPRAAPASSAGASDAR. The helical; Signal-anchor for type II membrane protein transmembrane segment at 58-78 threads the bilayer; sequence LLVAAAMMLLAWPLALVASLG. Topologically, residues 79-534 are lumenal; it reads SAEKEPEQPP…GRKPVRKKLD (456 aa). The HXXXXD motif signature appears at 135–140; sequence HSSYFD. EF-hand domains follow at residues 379 to 414 and 451 to 486; these read PVSD…VCRP and VAEL…YPAF. D392, S394, S396, E398, and E403 together coordinate Ca(2+). The segment at 512–534 is disordered; the sequence is GFCADFSPENSDAGRKPVRKKLD. Residues 523-534 show a composition bias toward basic and acidic residues; that stretch reads DAGRKPVRKKLD. The short motif at 531–534 is the Di-lysine motif element; that stretch reads KKLD.

The protein belongs to the 1-acyl-sn-glycerol-3-phosphate acyltransferase family. As to expression, erythrocytes.

The protein localises to the endoplasmic reticulum membrane. The protein resides in the golgi apparatus membrane. Its subcellular location is the cell membrane. It is found in the lipid droplet. The enzyme catalyses a 1-acyl-sn-glycero-3-phosphocholine + an acyl-CoA = a 1,2-diacyl-sn-glycero-3-phosphocholine + CoA. The catalysed reaction is a 1-acyl-sn-glycero-3-phosphate + an acyl-CoA = a 1,2-diacyl-sn-glycero-3-phosphate + CoA. It carries out the reaction a 1-O-alkyl-sn-glycero-3-phosphocholine + acetyl-CoA = a 1-O-alkyl-2-acetyl-sn-glycero-3-phosphocholine + CoA. It catalyses the reaction a 1-O-(1Z-alkenyl)-sn-glycero-3-phosphocholine + an acyl-CoA = a 1-O-(1Z-alkenyl)-2-acyl-sn-glycero-3-phosphocholine + CoA. The enzyme catalyses 1-acyl-sn-glycero-3-phospho-(1'-sn-glycerol) + an acyl-CoA = a 1,2-diacyl-sn-glycero-3-phospho-(1'-sn-glycerol) + CoA. The catalysed reaction is 1-hexadecanoyl-sn-glycero-3-phosphocholine + (9Z)-octadecenoyl-CoA = 1-hexadecanoyl-2-(9Z-octadecenoyl)-sn-glycero-3-phosphocholine + CoA. It carries out the reaction 1-hexadecanoyl-sn-glycero-3-phosphocholine + hexadecanoyl-CoA = 1,2-dihexadecanoyl-sn-glycero-3-phosphocholine + CoA. It catalyses the reaction 1-O-hexadecyl-sn-glycero-3-phosphocholine + hexadecanoyl-CoA = 1-O-hexadecyl-2-hexadecanoyl-sn-glycero-3-phosphocholine + CoA. The enzyme catalyses a 1-O-(1Z-alkenyl)-sn-glycero-3-phosphocholine + hexadecanoyl-CoA = 1-O-(1Z)-alkenyl-2-hexadecanoyl-sn-glycero-3-phosphocholine + CoA. The catalysed reaction is 1-hexadecanoyl-sn-glycero-3-phospho-(1'-sn-glycerol) + hexadecanoyl-CoA = 1,2-dihexadecanoyl-sn-glycero-3-phospho-(1'-sn-glycerol) + CoA. It carries out the reaction 1-dodecanoyl-sn-glycero-3-phosphocholine + hexadecanoyl-CoA = 1-dodecanoyl-2-hexadecanoyl-sn-glycero-3-phosphocholine + CoA. It catalyses the reaction 1-tetradecanoyl-sn-glycero-3-phosphocholine + hexadecanoyl-CoA = 1-tetradecanoyl-2-hexadecanoyl-sn-glycero-3-phosphocholine + CoA. The enzyme catalyses 1-O-octadecyl-sn-glycero-3-phosphocholine + hexadecanoyl-CoA = 1-O-octadecyl-2-hexadecanoyl-sn-glycero-3-phosphocholine + CoA. The catalysed reaction is 1-octadecanoyl-sn-glycero-3-phosphocholine + hexadecanoyl-CoA = 1-octadecanoyl-2-hexadecanoyl-sn-glycero-3-phosphocholine + CoA. It carries out the reaction 1-(9Z-octadecenoyl)-sn-glycero-3-phosphocholine + hexadecanoyl-CoA = 1-(9Z-octadecenoyl)-2-hexadecanoyl-sn-glycero-3-phosphocholine + CoA. It catalyses the reaction 1-eicosanoyl-sn-glycero-3-phosphocholine + hexadecanoyl-CoA = 1-eicosanoyl-2-hexadecanoyl-sn-glycero-3-phosphocholine + CoA. The enzyme catalyses hexanoyl-CoA + 1-hexadecanoyl-sn-glycero-3-phosphocholine = 1-hexadecanoyl-2-hexanoyl-sn-glycero-3-phosphocholine + CoA. The catalysed reaction is octanoyl-CoA + 1-hexadecanoyl-sn-glycero-3-phosphocholine = 1-hexadecanoyl-2-octanoyl-sn-glycero-3-phosphocholine + CoA. It carries out the reaction decanoyl-CoA + 1-hexadecanoyl-sn-glycero-3-phosphocholine = 1-hexadecanoyl-2-decanoyl-sn-glycero-3-phosphocholine + CoA. It catalyses the reaction dodecanoyl-CoA + 1-hexadecanoyl-sn-glycero-3-phosphocholine = 1-hexadecanoyl-2-dodecanoyl-sn-glycero-3-phosphocholine + CoA. The enzyme catalyses tetradecanoyl-CoA + 1-hexadecanoyl-sn-glycero-3-phosphocholine = 1-hexadecanoyl-2-tetradecanoyl-sn-glycero-3-phosphocholine + CoA. The catalysed reaction is (9Z,12Z)-octadecadienoyl-CoA + 1-hexadecanoyl-sn-glycero-3-phosphocholine = 1-hexadecanoyl-2-(9Z,12Z-octadecadienoyl)-sn-glycero-3-phosphocholine + CoA. It carries out the reaction (4Z,7Z,10Z,13Z,16Z,19Z)-docosahexaenoyl-CoA + 1-hexadecanoyl-sn-glycero-3-phosphocholine = 1-hexadecanoyl-2-(4Z,7Z,10Z,13Z,16Z,19Z-docosahexaenoyl)-sn-glycero-3-phosphocholine + CoA. It catalyses the reaction 1-hexadecanoyl-sn-glycero-3-phosphocholine + acetyl-CoA = 1-hexadecanoyl-2-acetyl-sn-glycero-3-phosphocholine + CoA. The enzyme catalyses eicosanoyl-CoA + 1-hexadecanoyl-sn-glycero-3-phosphocholine = 1-hexadecanoyl-2-eicosanoyl-sn-glycero-3-phosphocholine + CoA. The catalysed reaction is 1-O-hexadecyl-sn-glycero-3-phosphocholine + acetyl-CoA = 1-O-hexadecyl-2-acetyl-sn-glycero-3-phosphocholine + CoA. It carries out the reaction a 1-acyl-sn-glycero-3-phosphocholine + hexadecanoyl-CoA = 1-acyl-2-hexadecanoyl-sn-glycero-3-phosphocholine + CoA. It catalyses the reaction a 1-acyl-sn-glycero-3-phosphate + hexadecanoyl-CoA = 1-acyl-2-hexadecanoyl-sn-glycero-3-phosphate + CoA. The enzyme catalyses 1-acyl-sn-glycero-3-phospho-(1'-sn-glycerol) + hexadecanoyl-CoA = 1-acyl-2-hexadecanoyl-sn-glycero-3-phospho-(1'-sn-glycerol) + CoA. The protein operates within lipid metabolism; phospholipid metabolism. Its function is as follows. Exhibits acyltransferase activity. Exhibits acetyltransferase activity. Activity is calcium-independent. Catalyzes the conversion of lysophosphatidylcholine (1-acyl-sn-glycero-3-phosphocholine or LPC) into phosphatidylcholine (1,2-diacyl-sn-glycero-3-phosphocholine or PC). Catalyzes the conversion 1-acyl-sn-glycerol-3-phosphate (lysophosphatidic acid or LPA) into 1,2-diacyl-sn-glycerol-3-phosphate (phosphatidic acid or PA) by incorporating an acyl moiety at the sn-2 position of the glycerol backbone. Displays a clear preference for saturated fatty acyl-CoAs, and 1-myristoyl or 1-palmitoyl LPC as acyl donors and acceptors, respectively. Involved in platelet-activating factor (PAF) biosynthesis by catalyzing the conversion of the PAF precursor, 1-O-alkyl-sn-glycero-3-phosphocholine (lyso-PAF) into 1-O-alkyl-2-acetyl-sn-glycero-3-phosphocholine (PAF). May synthesize phosphatidylcholine in pulmonary surfactant, thereby playing a pivotal role in respiratory physiology. Involved in the regulation of lipid droplet number and size. The sequence is that of Lysophosphatidylcholine acyltransferase 1 (LPCAT1) from Homo sapiens (Human).